Reading from the N-terminus, the 285-residue chain is NAD kinase (285 aa).

Asp-66 serves as the catalytic Proton acceptor. Residues 66-67 (DG), 137-138 (ND), Arg-148, Arg-165, Asp-167, and 178-183 (TAYSMS) each bind NAD(+).

Belongs to the NAD kinase family. It depends on a divalent metal cation as a cofactor.

It localises to the cytoplasm. It catalyses the reaction NAD(+) + ATP = ADP + NADP(+) + H(+). Functionally, involved in the regulation of the intracellular balance of NAD and NADP, and is a key enzyme in the biosynthesis of NADP. Catalyzes specifically the phosphorylation on 2'-hydroxyl of the adenosine moiety of NAD to yield NADP. This is NAD kinase from Chlorobium phaeobacteroides (strain DSM 266 / SMG 266 / 2430).